The sequence spans 491 residues: Keratin, type I cytoskeletal 24 (491 aa).

The disordered stretch occupies residues 1 to 23 (MFCSAQKGSCSSRVSSSGAVGSR). The head stretch occupies residues 1–117 (MFCSAQKGSC…GYDGGLLSGS (117 aa)). Residues 8 to 23 (GSCSSRVSSSGAVGSR) are compositionally biased toward low complexity. The tract at residues 118 to 153 (EKQTMQGLNDRLANYLDKVRALEEANTDLETKIKDW) is coil 1A. The IF rod domain maps to 118 to 432 (EKQTMQGLND…RLLNGDGGGC (315 aa)). A linker 1 region spans residues 154–174 (YGRHGSGKDGPGRDYSQYCSV). Positions 175-266 (IEDLKNQIIS…KNHEEEMKCL (92 aa)) are coil 1B. The tract at residues 267–289 (QGSSGGDVTVEMNATPGTDLTKL) is linker 12. A coil 2 region spans residues 290 to 428 (LNDMRAQYEA…ETYRRLLNGD (139 aa)). The interval 429–491 (GGGCDYRNLV…VSNISEVKIK (63 aa)) is tail.

Belongs to the intermediate filament family. Heterotetramer of two type I and two type II keratins.

This chain is Keratin, type I cytoskeletal 24 (Krt24), found in Rattus norvegicus (Rat).